The following is an 81-amino-acid chain: Small ribosomal subunit protein eS21 (81 aa).

It belongs to the eukaryotic ribosomal protein eS21 family. In terms of assembly, component of the 40S small ribosomal subunit.

It is found in the cytoplasm. It localises to the cytosol. The protein localises to the rough endoplasmic reticulum. Functionally, component of the small ribosomal subunit. The ribosome is a large ribonucleoprotein complex responsible for the synthesis of proteins in the cell. This Danio rerio (Zebrafish) protein is Small ribosomal subunit protein eS21 (rps21).